The following is a 108-amino-acid chain: ATP synthase peripheral stalk subunit F6, mitochondrial (108 aa).

A mitochondrion-targeting transit peptide spans 1–32 (MILQRLFRFSSIIRSAVSVHFRRNIGVTAVAF). 3 positions are modified to N6-acetyllysine: Lys41, Lys46, and Lys79. Lys84, Lys94, and Lys99 each carry N6-acetyllysine; alternate. N6-succinyllysine; alternate occurs at positions 84, 94, and 99. Lys105 is subject to N6-acetyllysine.

This sequence belongs to the eukaryotic ATPase subunit F6 family. As to quaternary structure, component of the ATP synthase complex composed at least of ATP5F1A/subunit alpha, ATP5F1B/subunit beta, ATP5MC1/subunit c (homooctomer), MT-ATP6/subunit a, MT-ATP8/subunit 8, ATP5ME/subunit e, ATP5MF/subunit f, ATP5MG/subunit g, ATP5MK/subunit k, ATP5MJ/subunit j, ATP5F1C/subunit gamma, ATP5F1D/subunit delta, ATP5F1E/subunit epsilon, ATP5PF/subunit F6, ATP5PB/subunit b, ATP5PD/subunit d, ATP5PO/subunit OSCP. ATP synthase complex consists of a soluble F(1) head domain (subunits alpha(3) and beta(3)) - the catalytic core - and a membrane F(0) domain - the membrane proton channel (subunits c, a, 8, e, f, g, k and j). These two domains are linked by a central stalk (subunits gamma, delta, and epsilon) rotating inside the F1 region and a stationary peripheral stalk (subunits F6, b, d, and OSCP).

It is found in the mitochondrion. The protein resides in the mitochondrion inner membrane. Its function is as follows. Subunit F6, of the mitochondrial membrane ATP synthase complex (F(1)F(0) ATP synthase or Complex V) that produces ATP from ADP in the presence of a proton gradient across the membrane which is generated by electron transport complexes of the respiratory chain. ATP synthase complex consist of a soluble F(1) head domain - the catalytic core - and a membrane F(1) domain - the membrane proton channel. These two domains are linked by a central stalk rotating inside the F(1) region and a stationary peripheral stalk. During catalysis, ATP synthesis in the catalytic domain of F(1) is coupled via a rotary mechanism of the central stalk subunits to proton translocation. In vivo, can only synthesize ATP although its ATP hydrolase activity can be activated artificially in vitro. Part of the complex F(0) domain. Part of the complex F(0) domain and the peripheric stalk, which acts as a stator to hold the catalytic alpha(3)beta(3) subcomplex and subunit a/ATP6 static relative to the rotary elements. This chain is ATP synthase peripheral stalk subunit F6, mitochondrial, found in Macaca fascicularis (Crab-eating macaque).